A 148-amino-acid chain; its full sequence is Large ribosomal subunit protein uL15 (148 aa).

A compositionally biased stretch (basic and acidic residues) spans 1–10; the sequence is MQLHNLEYKK. The interval 1-42 is disordered; sequence MQLHNLEYKKGSRNHKEKRVGRGHGSGLGKTSGRGQDGQKAR. Residues 11-22 show a composition bias toward basic residues; sequence GSRNHKEKRVGR. The segment covering 23 to 36 has biased composition (gly residues); that stretch reads GHGSGLGKTSGRGQ.

It belongs to the universal ribosomal protein uL15 family. Part of the 50S ribosomal subunit.

Binds to the 23S rRNA. This Ureaplasma urealyticum serovar 10 (strain ATCC 33699 / Western) protein is Large ribosomal subunit protein uL15.